The following is a 156-amino-acid chain: Endoribonuclease YbeY (156 aa).

3 residues coordinate Zn(2+): His-122, His-126, and His-132.

The protein belongs to the endoribonuclease YbeY family. Zn(2+) serves as cofactor.

Its subcellular location is the cytoplasm. In terms of biological role, single strand-specific metallo-endoribonuclease involved in late-stage 70S ribosome quality control and in maturation of the 3' terminus of the 16S rRNA. This chain is Endoribonuclease YbeY, found in Moorella thermoacetica (strain ATCC 39073 / JCM 9320).